A 428-amino-acid chain; its full sequence is Aerobic C4-dicarboxylate transport protein (428 aa).

The next 9 helical transmembrane spans lie at 5 to 27, 47 to 64, 77 to 99, 141 to 163, 184 to 206, 216 to 238, 289 to 311, 326 to 348, and 353 to 375; these read LFKS…GHYY, MIIA…IAGM, ALLY…VNVV, VIGA…FGFA, VIFG…AMAF, LVQL…VVVL, VVGL…YLTM, IFHQ…GVTG, and VLAA…ILGI.

It belongs to the dicarboxylate/amino acid:cation symporter (DAACS) (TC 2.A.23) family.

The protein localises to the cell inner membrane. Its function is as follows. Responsible for the transport of dicarboxylates such as succinate, fumarate, and malate from the periplasm across the inner membrane. This chain is Aerobic C4-dicarboxylate transport protein (dctA), found in Salmonella typhimurium (strain LT2 / SGSC1412 / ATCC 700720).